A 182-amino-acid polypeptide reads, in one-letter code: MAATMMSKTIISSKQCSKPIAPPKVSINKGFVNTSAAIKNREMMVWQPFNNKMFETFSYLPPLTDEQISKQVDYILANAWTPCLEFAASDQAYAGNENCITMGPVASTYQDNRYWTMWKLPMFGCTDGSQVLTEIQACTKAFPDAYIRLVCFDANRQVQISGFLVHRPPSATDYRLPADRQV.

The transit peptide at 1–41 (MAATMMSKTIISSKQCSKPIAPPKVSINKGFVNTSAAIKNR) directs the protein to the chloroplast.

Belongs to the RuBisCO small chain family. In terms of assembly, heterohexadecamer of 8 large and 8 small subunits.

It is found in the plastid. Its subcellular location is the chloroplast. In terms of biological role, ruBisCO catalyzes two reactions: the carboxylation of D-ribulose 1,5-bisphosphate, the primary event in carbon dioxide fixation, as well as the oxidative fragmentation of the pentose substrate. Both reactions occur simultaneously and in competition at the same active site. Although the small subunit is not catalytic it is essential for maximal activity. The polypeptide is Ribulose bisphosphate carboxylase small subunit, chloroplastic 6 (Acetabularia peniculus (Green alga)).